The sequence spans 449 residues: Hyaluronidase-2 (449 aa).

Residues 1–23 (MYHLWIKCLAAWIFLKRCNGVHA) form the signal peptide. Disulfide bonds link Cys47-Cys340 and Cys211-Cys227. 3 N-linked (GlcNAc...) asparagine glycosylation sites follow: Asn67, Asn103, and Asn111. The Proton donor role is filled by Glu135. Asn153 carries N-linked (GlcNAc...) asparagine glycosylation. N-linked (GlcNAc...) asparagine glycosylation is present at Asn357. 3 disulfides stabilise this stretch: Cys365–Cys376, Cys370–Cys427, and Cys429–Cys438. The N-linked (GlcNAc...) asparagine glycan is linked to Asn401. Residues 427–438 (CQCYQGWKGLYC) enclose the EGF-like domain.

The protein belongs to the glycosyl hydrolase 56 family. As to quaternary structure, monomer. Expressed by the venom gland.

It is found in the secreted. It carries out the reaction Random hydrolysis of (1-&gt;4)-linkages between N-acetyl-beta-D-glucosamine and D-glucuronate residues in hyaluronate.. Its function is as follows. Snake venom endo-hyaluronidase that degrades hyaluronan to smaller oligosaccharide fragments. In venom, it is not toxic by itself, but increases the diffusion of other venom proteins by degrading the extracellular matrix. In addition, it displays antiedematogenic activity. This is Hyaluronidase-2 from Bitis arietans (African puff adder).